We begin with the raw amino-acid sequence, 503 residues long: Maturase K (503 aa).

The protein belongs to the intron maturase 2 family. MatK subfamily.

Its subcellular location is the plastid. It localises to the chloroplast. Functionally, usually encoded in the trnK tRNA gene intron. Probably assists in splicing its own and other chloroplast group II introns. This Syzygium australe (Brush cherry) protein is Maturase K.